We begin with the raw amino-acid sequence, 282 residues long: MLARSALFVHSAELAANAARAASGAAAAQPKKTGNRIKTFEIYRFNPEAPGAKPTIQKFDVDLDQCGTMILDALIKIKNEVDPTLTFRRSCREGICGSCAMNIGGENTLACICKIDADTSKSTKIYPLPHMFVVKDLVPDMNLFYAQYASIQPWIQKKTPLTLGEKQMHQSVAERDRLDGLYECILCACCSTSCPSYWWNADKYLGPAVLMQAYRWVIDSRDDYAQERLHRMHDSFSAFKCHTIMNCTKTCPKHLNPAKAIGEIKSLLTGFKSKPAAEPSAF.

One can recognise a 2Fe-2S ferredoxin-type domain in the interval 43-131 (YRFNPEAPGA…STKIYPLPHM (89 aa)). Cys-91, Cys-96, Cys-99, and Cys-111 together coordinate [2Fe-2S] cluster. Positions 174 to 204 (ERDRLDGLYECILCACCSTSCPSYWWNADKY) constitute a 4Fe-4S ferredoxin-type domain. [4Fe-4S] cluster is bound by residues Cys-184, Cys-187, and Cys-190. Cys-194 serves as a coordination point for [3Fe-4S] cluster. Trp-199 serves as a coordination point for a ubiquinone. 2 residues coordinate [3Fe-4S] cluster: Cys-241 and Cys-247. A [4Fe-4S] cluster-binding site is contributed by Cys-251.

It belongs to the succinate dehydrogenase/fumarate reductase iron-sulfur protein family. Component of complex II composed of four subunits: a flavoprotein (FP), an iron-sulfur protein (IP), and a cytochrome b composed of a large and a small subunit. [2Fe-2S] cluster is required as a cofactor. Requires [3Fe-4S] cluster as cofactor. [4Fe-4S] cluster serves as cofactor.

It localises to the mitochondrion inner membrane. It carries out the reaction a quinone + succinate = fumarate + a quinol. The protein operates within carbohydrate metabolism; tricarboxylic acid cycle; fumarate from succinate (eukaryal route): step 1/1. Iron-sulfur protein (IP) subunit of succinate dehydrogenase (SDH) that is involved in complex II of the mitochondrial electron transport chain and is responsible for transferring electrons from succinate to ubiquinone (coenzyme Q). The protein is Succinate dehydrogenase [ubiquinone] iron-sulfur subunit, mitochondrial of Caenorhabditis briggsae.